Reading from the N-terminus, the 467-residue chain is Uronate isomerase (467 aa).

Belongs to the metallo-dependent hydrolases superfamily. Uronate isomerase family.

The catalysed reaction is D-glucuronate = D-fructuronate. The enzyme catalyses aldehydo-D-galacturonate = keto-D-tagaturonate. It functions in the pathway carbohydrate metabolism; pentose and glucuronate interconversion. The polypeptide is Uronate isomerase (Haemophilus influenzae (strain PittGG)).